The chain runs to 150 residues: Sec-independent protein translocase protein TatB (150 aa).

The chain crosses the membrane as a helical span at residues 1–21; the sequence is MFDLSWSEIALVGVVALIVIG. Over residues 77–86 the composition is skewed to basic and acidic residues; that stretch reads KIDQAIDPDG. A disordered region spans residues 77–150; that stretch reads KIDQAIDPDG…RTDGSLPPQD (74 aa). The span at 109–135 shows a compositional bias: pro residues; the sequence is AAPPSLPPQAPAQPVPPATGAAPPSPS.

The protein belongs to the TatB family. As to quaternary structure, the Tat system comprises two distinct complexes: a TatABC complex, containing multiple copies of TatA, TatB and TatC subunits, and a separate TatA complex, containing only TatA subunits. Substrates initially bind to the TatABC complex, which probably triggers association of the separate TatA complex to form the active translocon.

The protein resides in the cell inner membrane. Functionally, part of the twin-arginine translocation (Tat) system that transports large folded proteins containing a characteristic twin-arginine motif in their signal peptide across membranes. Together with TatC, TatB is part of a receptor directly interacting with Tat signal peptides. TatB may form an oligomeric binding site that transiently accommodates folded Tat precursor proteins before their translocation. The protein is Sec-independent protein translocase protein TatB of Rhodospirillum rubrum (strain ATCC 11170 / ATH 1.1.1 / DSM 467 / LMG 4362 / NCIMB 8255 / S1).